The primary structure comprises 160 residues: Protein-export protein SecB (160 aa).

The protein belongs to the SecB family. In terms of assembly, homotetramer, a dimer of dimers. One homotetramer interacts with 1 SecA dimer.

It localises to the cytoplasm. Its function is as follows. One of the proteins required for the normal export of preproteins out of the cell cytoplasm. It is a molecular chaperone that binds to a subset of precursor proteins, maintaining them in a translocation-competent state. It also specifically binds to its receptor SecA. This Rhodospirillum rubrum (strain ATCC 11170 / ATH 1.1.1 / DSM 467 / LMG 4362 / NCIMB 8255 / S1) protein is Protein-export protein SecB.